The sequence spans 36 residues: Potassium channel toxin alpha-KTx 16.1 (36 aa).

3 disulfide bridges follow: Cys-7–Cys-28, Cys-13–Cys-33, and Cys-17–Cys-35.

It belongs to the short scorpion toxin superfamily. Potassium channel inhibitor family. Alpha-KTx 16 subfamily. As to expression, expressed by the venom gland.

It is found in the secreted. Blocks calcium-activated potassium channels. This Hottentotta tamulus (Eastern Indian scorpion) protein is Potassium channel toxin alpha-KTx 16.1.